The primary structure comprises 1105 residues: MAAMAPALTDAAAEAHHIRFKLAPPSSTLSPGSAENNGNANILIAANGTKRKAIAAEDPSLDFRNNPTKEDLGKLQPLVASYLCSDVTSVPSKESLKLQGVFSKQTVLKSHPLLSQSYELRAELLGRQPVLEFSLENLRTMNTSGQTALPQAPVNGLAKKLTKSSTHSDHDNSTSLNGGKRALTSSALHGGEMGGSESGDLKGGMTNCTLPHRSLDVEHTTLYSNNSTANKSSVNSMEQPALQGSSRLSPGTDSSSNLGGVKLEGKKSPLSSILFSALDSDTRITALLRRQADIESRARRLQKRLQVVQAKQVERHIQHQLGGFLEKTLSKLPNLESLRPRSQLMLTRKAEAALRKAASETTTSEGLSNFLKSNSISEELERFTASGIANLRCSEQAFDSDVTDSSSGGESDIEEEELTRADPEQRHVPLRRRSEWKWAADRAAIVSRWNWLQAHVSDLEYRIRQQTDIYKQIRANKGLIVLGEVPPPEHTTDLFLPLSSEVKTDHGTDKLIESVSQPLENHGAPIIGHISESLSTKSCGALRPVNGVINTLQPVLADHIPGDSSDAEEQLHKKQRLNLVSSSSDGTCVAARTRPVLSCKKRRLVRPNSIVPLSKKVHRNSTIRPGCDVNPSCALCGSGSINTMPPEIHYEAPLLERLSQLDSCVHPVLAFPDDVPTSLHFQSMLKSQWQNKPFDKIKPPKKLSLKHRAPMPGSLPDSARKDRHKLVSSFLTTAKLSHHQTRPDRTHRQHLDDVGAVPMVERVTAPKAERLLNPPPPVHDPNHSKMRLRDHSSERSEVLKHHTDMSSSSYLAATHHPPHSPLVRQLSTSSDSPAPASSSSQVTASTSQQPVRRRRGESSFDINNIVIPMSVAATTRVEKLQYKEILTPSWREVDLQSLKGSPDEENEEIEDLSDAAFAALHAKCEEMERARWLWTTSVPPQRRGSRSYRSSDGRTTPQLGSANPSTPQPASPDVSSSHSLSEYSHGQSPRSPISPELHSAPLTPVARDTPRHLASEDTRCSTPELGLDEQSVQPWERRTFPLAHSPQAECEDQLDAQERAARCTRRTSGSKTGRETEAAPTSPPIVPLKSRHLVAAATAQRPTHR.

Position 104 is an N6-acetyllysine (Lys-104). 2 disordered regions span residues 145-211 and 225-263; these read GQTA…CTLP and NNST…GVKL. Residues 225 to 258 show a composition bias toward polar residues; that stretch reads NNSTANKSSVNSMEQPALQGSSRLSPGTDSSSNL. Ser-249 is modified (phosphoserine). Lys-262 is covalently cross-linked (Glycyl lysine isopeptide (Lys-Gly) (interchain with G-Cter in SUMO2)). A Phosphoserine modification is found at Ser-268. A coiled-coil region spans residues 283–314; that stretch reads RITALLRRQADIESRARRLQKRLQVVQAKQVE. Residue Lys-331 forms a Glycyl lysine isopeptide (Lys-Gly) (interchain with G-Cter in SUMO2) linkage. Disordered regions lie at residues 399-426 and 733-857; these read DSDV…PEQR and TAKL…RRGE. Basic and acidic residues-rich tracts occupy residues 741–753 and 780–804; these read TRPD…HLDD and DPNH…HHTD. The span at 827–850 shows a compositional bias: low complexity; sequence STSSDSPAPASSSSQVTASTSQQP. A required for activation of KAT8 histone acetyltransferase activity region spans residues 850–882; that stretch reads PVRRRRGESSFDINNIVIPMSVAATTRVEKLQY. The region spanning 884–1035 is the PEHE domain; the sequence is EILTPSWREV…GLDEQSVQPW (152 aa). Residues 910-928 are interaction with KAT8 HAT domain; sequence EDLSDAAFAALHAKCEEME. Residues 938-1034 form a disordered region; it reads VPPQRRGSRS…LGLDEQSVQP (97 aa). Over residues 955-965 the composition is skewed to polar residues; that stretch reads TTPQLGSANPS. Positions 975–988 are enriched in low complexity; that stretch reads SSSHSLSEYSHGQS. Ser-991 and Ser-994 each carry phosphoserine. Thr-1003 is subject to Phosphothreonine. Residues 1008-1019 show a composition bias toward basic and acidic residues; that stretch reads DTPRHLASEDTR. Ser-1045 is subject to Phosphoserine. Positions 1058 to 1105 are disordered; that stretch reads ERAARCTRRTSGSKTGRETEAAPTSPPIVPLKSRHLVAAATAQRPTHR.

In terms of assembly, component of the NSL complex at least composed of MOF/KAT8, KANSL1, KANSL2, KANSL3, MCRS1, PHF20, OGT1/OGT, WDR5 and HCFC1. Interacts (via PEHE domain) with KAT8 (via HAT domain); the interaction is direct. Component of some MLL1/MLL complex, at least composed of the core components KMT2A/MLL1, ASH2L, HCFC1, WDR5 and RBBP5, as well as the facultative components BACC1, CHD8, E2F6, HSP70, INO80C, KANSL1, LAS1L, MAX, MCRS1, MGA, KAT8/MOF, PELP1, PHF20, PRP31, RING2, RUVB1/TIP49A, RUVB2/TIP49B, SENP3, TAF1, TAF4, TAF6, TAF7, TAF9 and TEX10. As to expression, expressed in the brain.

It is found in the nucleus. Its subcellular location is the chromosome. It localises to the centromere. The protein resides in the kinetochore. The protein localises to the mitochondrion. It is found in the cytoplasm. Its subcellular location is the cytoskeleton. It localises to the spindle pole. Its function is as follows. Non-catalytic component of the NSL histone acetyltransferase complex, a multiprotein complex that mediates histone H4 acetylation at 'Lys-5'- and 'Lys-8' (H4K5ac and H4K8ac) at transcription start sites and promotes transcription initiation. The NSL complex also acts as a regulator of gene expression in mitochondria. In addition to its role in transcription, KANSL1 also plays an essential role in spindle assembly during mitosis. Associates with microtubule ends and contributes to microtubule stability. The chain is KAT8 regulatory NSL complex subunit 1 (KANSL1) from Homo sapiens (Human).